The sequence spans 303 residues: GTPase Era (303 aa).

The Era-type G domain maps to 7–174 (KSGFVAILGR…IDTLSEKLDE (168 aa)). Positions 15-22 (GRPNVGKS) are G1. Position 15–22 (15–22 (GRPNVGKS)) interacts with GTP. The interval 41–45 (QTTRN) is G2. The tract at residues 62-65 (DTPG) is G3. GTP-binding positions include 62-66 (DTPGI) and 124-127 (NKID). Residues 124–127 (NKID) form a G4 region. The segment at 153–155 (ISA) is G5. In terms of domain architecture, KH type-2 spans 205 to 283 (TREEVPHSIA…YLETWVKIKN (79 aa)).

The protein belongs to the TRAFAC class TrmE-Era-EngA-EngB-Septin-like GTPase superfamily. Era GTPase family. As to quaternary structure, monomer.

It is found in the cytoplasm. Its subcellular location is the cell membrane. An essential GTPase that binds both GDP and GTP, with rapid nucleotide exchange. Plays a role in 16S rRNA processing and 30S ribosomal subunit biogenesis and possibly also in cell cycle regulation and energy metabolism. The chain is GTPase Era from Lactococcus lactis subsp. lactis (strain IL1403) (Streptococcus lactis).